The following is a 569-amino-acid chain: Rab GTPase-binding effector protein 2 (569 aa).

Disordered stretches follow at residues 1 to 38, 181 to 267, and 388 to 414; these read MAAA…AELG, QRRP…ASLV, and RAEQ…PSSV. A2 carries the post-translational modification N-acetylalanine. Positions 29 to 38 are enriched in low complexity; it reads EGANGEAELG. Residues 34-184 adopt a coiled-coil conformation; that stretch reads EAELGELSRL…ELIQEIQRRP (151 aa). Residues S189, S193, S200, and S204 each carry the phosphoserine modification. A compositionally biased stretch (low complexity) spans 245 to 257; sequence SSSSLPRSRQGLS. Positions 292 to 391 form a coiled coil; sequence WEQLQMEGRQ…EENQGLRAEQ (100 aa). Low complexity predominate over residues 393-403; sequence PSSAPQGPQQE. Residues 423–523 are a coiled coil; sequence RTRQEARAQL…LQAELETSEQ (101 aa).

The protein belongs to the rabaptin family. In terms of assembly, heterodimer with RABGEF1. The dimer binds RAB5A that has been activated by GTP-binding. Interacts with SDCCAG8; this interaction is important for ciliogenesis regulation. Interacts with RAB4; this interaction may mediate VEGFR2 cell surface expression.

The protein localises to the cytoplasm. Its subcellular location is the early endosome. The protein resides in the cytoskeleton. It localises to the microtubule organizing center. It is found in the centrosome. The protein localises to the cilium basal body. Its function is as follows. Plays a role in membrane trafficking and in homotypic early endosome fusion. Participates in arteriogenesis by regulating vascular endothelial growth factor receptor 2/VEGFR2 cell surface expression and endosomal trafficking. By interacting with SDCCAG8, localizes to centrosomes and plays a critical role in ciliogenesis. In Pongo abelii (Sumatran orangutan), this protein is Rab GTPase-binding effector protein 2 (RABEP2).